Here is a 343-residue protein sequence, read N- to C-terminus: Aspartate-semialdehyde dehydrogenase (343 aa).

NADP(+) contacts are provided by residues 13–16 (TGAV) and 41–42 (KS). Position 103 (R103) interacts with phosphate. C134 functions as the Acyl-thioester intermediate in the catalytic mechanism. Q161 provides a ligand contact to substrate. Residue 164-165 (SG) coordinates NADP(+). K220 contributes to the phosphate binding site. Residue R241 participates in substrate binding. H248 acts as the Proton acceptor in catalysis. Q321 contributes to the NADP(+) binding site.

It belongs to the aspartate-semialdehyde dehydrogenase family. As to quaternary structure, homodimer.

It catalyses the reaction L-aspartate 4-semialdehyde + phosphate + NADP(+) = 4-phospho-L-aspartate + NADPH + H(+). It functions in the pathway amino-acid biosynthesis; L-lysine biosynthesis via DAP pathway; (S)-tetrahydrodipicolinate from L-aspartate: step 2/4. Its pathway is amino-acid biosynthesis; L-methionine biosynthesis via de novo pathway; L-homoserine from L-aspartate: step 2/3. The protein operates within amino-acid biosynthesis; L-threonine biosynthesis; L-threonine from L-aspartate: step 2/5. Functionally, catalyzes the NADPH-dependent formation of L-aspartate-semialdehyde (L-ASA) by the reductive dephosphorylation of L-aspartyl-4-phosphate. This chain is Aspartate-semialdehyde dehydrogenase, found in Campylobacter jejuni subsp. jejuni serotype O:2 (strain ATCC 700819 / NCTC 11168).